Consider the following 1520-residue polypeptide: Glutamate synthase [NADPH] large chain (1520 aa).

C22 acts as the For GATase activity in catalysis. In terms of domain architecture, Glutamine amidotransferase type-2 spans 22-415 (CGIGLYAHLK…PGKMLLIDLE (394 aa)). Residues 890 to 913 (GGKSNSGEGGEDPKRFVPDENGDD) form a disordered region. Positions 900 to 913 (EDPKRFVPDENGDD) are enriched in basic and acidic residues. Residue 1060-1112 (LAEAHQTLMLNGLRDRVVLETDGKLMTGRDVVMAALLGAEEFGFATAPLVVLG) coordinates FMN. The [3Fe-4S] cluster site is built by C1113, C1119, and C1124.

Belongs to the glutamate synthase family. As to quaternary structure, aggregate of 4 catalytic active heterodimers, consisting of a large and a small subunit. Requires [3Fe-4S] cluster as cofactor. FAD is required as a cofactor. It depends on FMN as a cofactor.

It carries out the reaction 2 L-glutamate + NADP(+) = L-glutamine + 2-oxoglutarate + NADPH + H(+). The protein operates within amino-acid biosynthesis; L-glutamate biosynthesis via GLT pathway; L-glutamate from 2-oxoglutarate and L-glutamine (NADP(+) route): step 1/1. Its pathway is energy metabolism; nitrogen metabolism. This Bacillus subtilis (strain 168) protein is Glutamate synthase [NADPH] large chain (gltA).